The following is a 334-amino-acid chain: Cell division protein ZipA (334 aa).

The Periplasmic portion of the chain corresponds to methionine 1–glutamate 2. The chain crosses the membrane as a helical span at residues leucine 3–isoleucine 23. Topologically, residues tyrosine 24–serine 334 are cytoplasmic.

Belongs to the ZipA family. In terms of assembly, interacts with FtsZ via their C-terminal domains.

The protein resides in the cell inner membrane. Its function is as follows. Essential cell division protein that stabilizes the FtsZ protofilaments by cross-linking them and that serves as a cytoplasmic membrane anchor for the Z ring. Also required for the recruitment to the septal ring of downstream cell division proteins. The chain is Cell division protein ZipA from Haemophilus ducreyi (strain 35000HP / ATCC 700724).